A 432-amino-acid chain; its full sequence is MKVLVLGGGVIGVTSAYYLARAGAEVTVLDRQDAPASETSFANAGQVSPGYSTPWAAPGIPLKALKWMLQEHAPLAVRLDGSLFQLRWMAQMLRNCSAQRYAVNKERMMRVAEYSRSCLQQLRADTGIAYEQRTGGTLQLFRTQAQLDAVERDVAVLRECAVPFELLDRDQLAQVEPALAQARDRLTGGLRLPKDETGDCHRFTNELARIATGLGVELRFNQNVDGLVVEGGRIAGVRVNGELLTADRYVMAFGSYSRQALEPLGLDLPVYPVKGYSLTVPLGNPALAPQSTVLDETYKIAVTRFDDRIRVGGMAELGGFDLRLDPRRRATLELVVNDLFPGGDVARASFWTGLRPMTPDGTPIIGATRYANLFLNTGHGTLGWTMACGSGRLIADLITGRSPEISTDGLALDRYTHRPARHLGGSSTPVSA.

FAD is bound at residue 3–17 (VLVLGGGVIGVTSAY).

It belongs to the DadA oxidoreductase family. FAD is required as a cofactor.

It catalyses the reaction a D-alpha-amino acid + A + H2O = a 2-oxocarboxylate + AH2 + NH4(+). It functions in the pathway amino-acid degradation; D-alanine degradation; NH(3) and pyruvate from D-alanine: step 1/1. Functionally, oxidative deamination of D-amino acids. The sequence is that of D-amino acid dehydrogenase from Delftia acidovorans (strain DSM 14801 / SPH-1).